Reading from the N-terminus, the 54-residue chain is Anti-adapter protein SpxO (54 aa).

In terms of assembly, interacts with SpxH.

In terms of biological role, inhibitor of Spx proteolytic control. Acts by interacting with SpxH/YjbH, which disrupts interaction between SpxH and Spx, and inhibits SpxH-enhanced proteolysis of Spx by ClpXP. Required for the stabilization of Spx and activation of Spx-regulated genes in response to cell wall stress. In Bacillus subtilis (strain 168), this protein is Anti-adapter protein SpxO.